The following is a 255-amino-acid chain: Antigen LPMC-61 (255 aa).

Repeat copies occupy residues 18-48 (WPER…QKQQ), 49-57 (WPEGQRQQL), 58-65 (WPEQQQQQ), 66-78 (WPEQ…QQQQ), 79-90 (WPQQQPQMQQEQ), 91-103 (WPQQ…QQQQ), 104-140 (WPQQ…LQQQ), 141-152 (WSEQQQQQQQQQ), 153-164 (WPEQPEQQQQQQ), 165-172 (WPEQQQQQ), 173-192 (WSDQ…QQQQ), and 193-210 (WPQQ…QQQQ). The interval 18-90 (WPERQQQQQP…QQQPQMQQEQ (73 aa)) is disordered. Residues 18-210 (WPERQQQQQP…QQQQQQQQQQ (193 aa)) form a 12 X approximate tandem repeats, Gln-rich region. The span at 149–210 (QQQQWPEQPE…QQQQQQQQQQ (62 aa)) shows a compositional bias: low complexity. The disordered stretch occupies residues 149–224 (QQQQWPEQPE…DGVGIVVPYL (76 aa)).

May be covalently linked by disulfide bonds to other polypeptides to form the 80 kDa antigen.

Its function is as follows. Unknown. The Gln-rich tandem repeats may be important for an unknown aspect of the parasitic life cycle. May be an important immunogen. The chain is Antigen LPMC-61 from Eimeria tenella (Coccidian parasite).